The chain runs to 173 residues: Ribosome maturation factor RimM (173 aa).

The PRC barrel domain occupies 94–173 (EGEFYWRDLI…TIEVDWDPGF (80 aa)).

Belongs to the RimM family. As to quaternary structure, binds ribosomal protein uS19.

The protein resides in the cytoplasm. An accessory protein needed during the final step in the assembly of 30S ribosomal subunit, possibly for assembly of the head region. Essential for efficient processing of 16S rRNA. May be needed both before and after RbfA during the maturation of 16S rRNA. It has affinity for free ribosomal 30S subunits but not for 70S ribosomes. The sequence is that of Ribosome maturation factor RimM from Aeromonas salmonicida (strain A449).